The chain runs to 25 residues: Pregnancy-associated glycoprotein 74 (25 aa).

Residues N4 and N21 are each glycosylated (N-linked (GlcNAc...) asparagine).

This sequence belongs to the peptidase A1 family. N-glycosylated. In terms of tissue distribution, placental cotyledons.

The protein resides in the secreted. The protein localises to the extracellular space. The chain is Pregnancy-associated glycoprotein 74 from Bison bison (American bison).